A 441-amino-acid polypeptide reads, in one-letter code: Amino-acid acetyltransferase (441 aa).

In terms of domain architecture, N-acetyltransferase spans glutamate 295–serine 434.

This sequence belongs to the acetyltransferase family. ArgA subfamily. Homohexamer.

It is found in the cytoplasm. It catalyses the reaction L-glutamate + acetyl-CoA = N-acetyl-L-glutamate + CoA + H(+). The protein operates within amino-acid biosynthesis; L-arginine biosynthesis; N(2)-acetyl-L-ornithine from L-glutamate: step 1/4. The chain is Amino-acid acetyltransferase from Edwardsiella ictaluri (strain 93-146).